A 464-amino-acid chain; its full sequence is Lysosomal dipeptide transporter MFSD1 (464 aa).

The short motif at 11–12 (LL) is the Dileucine internalization motif element. At serine 20 the chain carries Phosphoserine. 12 consecutive transmembrane segments (helical) span residues 38-58 (LAHR…SYFC), 82-102 (LLYA…GFLI), 112-132 (TVIF…GGIF), 134-154 (AFWL…SLAV), 190-210 (LMGW…HMTL), 214-234 (LMIG…LAYL), 265-285 (LILV…FIGL), 303-323 (AINS…GLLV), 330-350 (IIWV…LAFT), 360-380 (LLGF…AFIV), 391-411 (FMQS…GMIL), and 417-437 (LLLE…VVCL).

It belongs to the major facilitator superfamily. As to quaternary structure, homodimer. Interacts with lysosomal protein GLMP (via lumenal domain); the interaction starts while both proteins are still in the endoplasmic reticulum and is required for stabilization of MFSD1 in lysosomes but has no direct effect on its targeting to lysosomes or transporter activity. Post-translationally, not N-glycosylated. As to expression, in brain, expressed in the cortex, striatum hippocampus, hypothalamus, thalamus and brainstem (at protein level). Widely expressed with highest levels in kidney and spleen (at protein level).

Its subcellular location is the lysosome membrane. It carries out the reaction L-alpha-aminoacyl-L-arginine(out) = L-alpha-aminoacyl-L-arginine(in). It catalyses the reaction L-arginyl-L-alpha-amino acid(out) = L-arginyl-L-alpha-amino acid(in). The catalysed reaction is L-arginyl-glycine(out) = L-arginyl-glycine(in). The enzyme catalyses L-alpha-aminoacyl-L-lysine(out) = L-alpha-aminoacyl-L-lysine(in). It carries out the reaction L-aspartyl-L-lysine(out) = L-aspartyl-L-lysine(in). It catalyses the reaction L-alanyl-L-lysine(out) = L-alanyl-L-lysine(in). The catalysed reaction is L-lysyl-L-alpha-amino acid(out) = L-lysyl-L-alpha-amino acid(in). The enzyme catalyses L-lysyl-L-alanine(out) = L-lysyl-L-alanine(in). It carries out the reaction L-lysyl-L-lysine(out) = L-lysyl-L-lysine(in). It catalyses the reaction L-lysyl-glycine(out) = L-lysyl-glycine(in). The catalysed reaction is L-alpha-aminoacyl-L-histidine(out) = L-alpha-aminoacyl-L-histidine(in). The enzyme catalyses L-histidyl-L-alpha-amino acid(out) = L-histidyl-L-alpha-amino acid(in). It carries out the reaction L-histidyl-glycine(out) = L-histidyl-glycine(in). In terms of biological role, lysosomal dipeptide uniporter that selectively exports lysine, arginine or histidine-containing dipeptides with a net positive charge from the lysosome lumen into the cytosol. Could play a role in a specific type of protein O-glycosylation indirectly regulating macrophages migration and tissue invasion. Also essential for liver homeostasis. The chain is Lysosomal dipeptide transporter MFSD1 from Mus musculus (Mouse).